Reading from the N-terminus, the 340-residue chain is Ferrochelatase (340 aa).

Positions 189 and 292 each coordinate Fe cation.

The protein belongs to the ferrochelatase family.

It localises to the cytoplasm. It carries out the reaction heme b + 2 H(+) = protoporphyrin IX + Fe(2+). Its pathway is porphyrin-containing compound metabolism; protoheme biosynthesis; protoheme from protoporphyrin-IX: step 1/1. In terms of biological role, catalyzes the ferrous insertion into protoporphyrin IX. This is Ferrochelatase from Pseudomonas aeruginosa (strain UCBPP-PA14).